The following is a 314-amino-acid chain: Ribose-phosphate pyrophosphokinase (314 aa).

ATP-binding positions include 37-39 (DGE) and 96-97 (RQ). Mg(2+)-binding residues include His131 and Asp170. Lys194 is a catalytic residue. D-ribose 5-phosphate contacts are provided by residues Arg196, Asp220, and 224–228 (DTGGT).

This sequence belongs to the ribose-phosphate pyrophosphokinase family. Class I subfamily. Homohexamer. Requires Mg(2+) as cofactor.

The protein resides in the cytoplasm. It catalyses the reaction D-ribose 5-phosphate + ATP = 5-phospho-alpha-D-ribose 1-diphosphate + AMP + H(+). It participates in metabolic intermediate biosynthesis; 5-phospho-alpha-D-ribose 1-diphosphate biosynthesis; 5-phospho-alpha-D-ribose 1-diphosphate from D-ribose 5-phosphate (route I): step 1/1. Involved in the biosynthesis of the central metabolite phospho-alpha-D-ribosyl-1-pyrophosphate (PRPP) via the transfer of pyrophosphoryl group from ATP to 1-hydroxyl of ribose-5-phosphate (Rib-5-P). The sequence is that of Ribose-phosphate pyrophosphokinase from Vibrio cholerae serotype O1 (strain ATCC 39315 / El Tor Inaba N16961).